We begin with the raw amino-acid sequence, 88 residues long: Small ribosomal subunit protein uS19 (88 aa).

This sequence belongs to the universal ribosomal protein uS19 family.

Functionally, protein S19 forms a complex with S13 that binds strongly to the 16S ribosomal RNA. The protein is Small ribosomal subunit protein uS19 of Chlamydia felis (strain Fe/C-56) (Chlamydophila felis).